A 109-amino-acid chain; its full sequence is Staphostatin B (109 aa).

Residues 97–101 (IGTSR) form a binds to staphopain B region.

This sequence belongs to the protease inhibitor I57 (SspC) family. Forms a stable non-covalent complex with prematurely activated/folded SspB.

It is found in the cytoplasm. Its function is as follows. Specifically inhibits the cysteine protease staphopain B (SspB) by blocking the active site of the enzyme. Probably required to protect cytoplasmic proteins from being degraded by prematurely activated/folded prostaphopain B. Also involved in growth capacity, viability and bacterial morphology. In Staphylococcus aureus (strain Mu50 / ATCC 700699), this protein is Staphostatin B (sspC).